A 248-amino-acid chain; its full sequence is 2,3-bisphosphoglycerate-dependent phosphoglycerate mutase (248 aa).

Substrate contacts are provided by residues 8-15, 21-22, R60, 87-90, K98, 114-115, and 183-184; these read RHGESTWN, TG, ERHY, RR, and GN. H9 acts as the Tele-phosphohistidine intermediate in catalysis. E87 (proton donor/acceptor) is an active-site residue.

The protein belongs to the phosphoglycerate mutase family. BPG-dependent PGAM subfamily. As to quaternary structure, homodimer.

It carries out the reaction (2R)-2-phosphoglycerate = (2R)-3-phosphoglycerate. Its pathway is carbohydrate degradation; glycolysis; pyruvate from D-glyceraldehyde 3-phosphate: step 3/5. Catalyzes the interconversion of 2-phosphoglycerate and 3-phosphoglycerate. The sequence is that of 2,3-bisphosphoglycerate-dependent phosphoglycerate mutase from Burkholderia lata (strain ATCC 17760 / DSM 23089 / LMG 22485 / NCIMB 9086 / R18194 / 383).